The primary structure comprises 413 residues: Snake venom metalloproteinase AaPA (413 aa).

Positions Met-1 to Ser-20 are cleaved as a signal peptide. Residues Ile-21–Thr-189 constitute a propeptide that is removed on maturation. A Peptidase M12B domain is found at Arg-193–Pro-390. Residues Glu-196 and Asp-280 each coordinate Ca(2+). 3 disulfide bridges follow: Cys-304/Cys-385, Cys-344/Cys-369, and Cys-346/Cys-352. Zn(2+) is bound at residue His-329. Glu-330 is an active-site residue. Zn(2+) contacts are provided by His-333 and His-339. Ca(2+) is bound by residues Cys-385, Asn-388, Val-400, Asn-403, Leu-405, Glu-407, and Asp-413. The propeptide occupies Leu-391–Asp-413.

Belongs to the venom metalloproteinase (M12B) family. P-I subfamily. In terms of assembly, monomer. It depends on Zn(2+) as a cofactor. Expressed by the venom gland.

It is found in the secreted. In terms of biological role, snake venom zinc metalloprotease that may activate prothrombin. The sequence is that of Snake venom metalloproteinase AaPA from Deinagkistrodon acutus (Hundred-pace snake).